Here is a 202-residue protein sequence, read N- to C-terminus: Urease accessory protein UreG (202 aa).

11-18 (GPVGSGKT) contributes to the GTP binding site.

Belongs to the SIMIBI class G3E GTPase family. UreG subfamily. In terms of assembly, homodimer. UreD, UreF and UreG form a complex that acts as a GTP-hydrolysis-dependent molecular chaperone, activating the urease apoprotein by helping to assemble the nickel containing metallocenter of UreC. The UreE protein probably delivers the nickel.

The protein localises to the cytoplasm. Its function is as follows. Facilitates the functional incorporation of the urease nickel metallocenter. This process requires GTP hydrolysis, probably effectuated by UreG. The protein is Urease accessory protein UreG of Prochlorococcus marinus (strain MIT 9313).